A 623-amino-acid chain; its full sequence is mRNA-capping enzyme (623 aa).

The TPase stretch occupies residues 13–224; that stretch reads MGLPDRWLHC…IDNGRPSTSQ (212 aa). The Tyrosine-protein phosphatase domain maps to 44–196; the sequence is YDNQIAERRY…YDPTEDDKIL (153 aa). Catalysis depends on cysteine 136, which acts as the Phosphocysteine intermediate. Residues 213–229 show a composition bias toward polar residues; that stretch reads TQIDNGRPSTSQQIPAT. Residues 213-243 form a disordered region; sequence TQIDNGRPSTSQQIPATNGNNNQNGNQLSGG. A compositionally biased stretch (low complexity) spans 230-239; the sequence is NGNNNQNGNQ. The GTase stretch occupies residues 241-585; that stretch reads SGGGDNSKLF…NPVTETYLIE (345 aa). The active-site N6-GMP-lysine intermediate is the lysine 311. Residues arginine 316, arginine 331, 357 to 359, 477 to 479, and 553 to 558 contribute to the GTP site; these read DTE, KWK, and RERTDK. The tract at residues 603-623 is disordered; the sequence is HHQIHQQQLHEGEPEARRQKL. The span at 610–623 shows a compositional bias: basic and acidic residues; sequence QLHEGEPEARRQKL.

The protein in the N-terminal section; belongs to the non-receptor class of the protein-tyrosine phosphatase family. It in the C-terminal section; belongs to the eukaryotic GTase family.

It localises to the nucleus. It catalyses the reaction a 5'-end triphospho-ribonucleoside in mRNA + H2O = a 5'-end diphospho-ribonucleoside in mRNA + phosphate + H(+). The enzyme catalyses a 5'-end diphospho-ribonucleoside in mRNA + GTP + H(+) = a 5'-end (5'-triphosphoguanosine)-ribonucleoside in mRNA + diphosphate. RNA triphosphatase activity is inhibited by magnesium. Its function is as follows. Bifunctional mRNA-capping enzyme exhibiting RNA 5'-triphosphate monophosphatase activity in the N-terminal part and mRNA guanylyltransferase activity in the C-terminal part. Catalyzes the first two steps of cap formation: by removing the gamma-phosphate from the 5'-triphosphate end of nascent mRNA to yield a diphosphate end, and by transferring the GMP moiety of GTP to the 5'-diphosphate terminus via a covalent enzyme-GMP reaction intermediate. In Caenorhabditis elegans, this protein is mRNA-capping enzyme (cel-1).